Reading from the N-terminus, the 689-residue chain is DNA topoisomerase 1 (689 aa).

Residues 3–113 form the Toprim domain; that stretch reads DNLVIVESPA…KENRVVFNEI (111 aa). Glu9 and Asp82 together coordinate Mg(2+). Residues 129–557 form the Topo IA-type catalytic domain; sequence EMDLVDAQQA…FYNSFKQDVE (429 aa). Positions 163 to 168 are interaction with DNA; that stretch reads SAGRVQ. Residue Tyr298 is the O-(5'-phospho-DNA)-tyrosine intermediate of the active site. C4-type zinc fingers lie at residues 577–603, 617–645, and 658–681; these read CEVC…FPDC, CPKC…YPEC, and CPKC…CSNC.

It belongs to the type IA topoisomerase family. In terms of assembly, monomer. Mg(2+) serves as cofactor.

It catalyses the reaction ATP-independent breakage of single-stranded DNA, followed by passage and rejoining.. Functionally, releases the supercoiling and torsional tension of DNA, which is introduced during the DNA replication and transcription, by transiently cleaving and rejoining one strand of the DNA duplex. Introduces a single-strand break via transesterification at a target site in duplex DNA. The scissile phosphodiester is attacked by the catalytic tyrosine of the enzyme, resulting in the formation of a DNA-(5'-phosphotyrosyl)-enzyme intermediate and the expulsion of a 3'-OH DNA strand. The free DNA strand then undergoes passage around the unbroken strand, thus removing DNA supercoils. Finally, in the religation step, the DNA 3'-OH attacks the covalent intermediate to expel the active-site tyrosine and restore the DNA phosphodiester backbone. This is DNA topoisomerase 1 from Staphylococcus epidermidis (strain ATCC 35984 / DSM 28319 / BCRC 17069 / CCUG 31568 / BM 3577 / RP62A).